The following is a 458-amino-acid chain: Adenylosuccinate synthetase (458 aa).

Residues 17–23 and 45–47 each bind GTP; these read GDEGKGK and GHT. Asp18 functions as the Proton acceptor in the catalytic mechanism. Positions 18 and 45 each coordinate Mg(2+). IMP-binding positions include 18 to 21, 43 to 46, Thr137, Arg151, Gln247, Thr262, and Arg330; these read DEGK and NAGH. His46 acts as the Proton donor in catalysis. 326 to 332 is a substrate binding site; sequence VTTGRSR. Residues Arg332, 358 to 360, and 440 to 442 each bind GTP; these read KLD and STS.

This sequence belongs to the adenylosuccinate synthetase family. As to quaternary structure, homodimer. The cofactor is Mg(2+).

It is found in the cytoplasm. The enzyme catalyses IMP + L-aspartate + GTP = N(6)-(1,2-dicarboxyethyl)-AMP + GDP + phosphate + 2 H(+). It participates in purine metabolism; AMP biosynthesis via de novo pathway; AMP from IMP: step 1/2. Its function is as follows. Plays an important role in the de novo pathway of purine nucleotide biosynthesis. Catalyzes the first committed step in the biosynthesis of AMP from IMP. The protein is Adenylosuccinate synthetase of Acidovorax ebreus (strain TPSY) (Diaphorobacter sp. (strain TPSY)).